An 804-amino-acid chain; its full sequence is Leucine--tRNA ligase (804 aa).

The short motif at 40-51 (PYPSGAGLHVGH) is the 'HIGH' region element. The 'KMSKS' region motif lies at 576–580 (KMSKS). Lys579 lines the ATP pocket.

The protein belongs to the class-I aminoacyl-tRNA synthetase family.

It localises to the cytoplasm. The enzyme catalyses tRNA(Leu) + L-leucine + ATP = L-leucyl-tRNA(Leu) + AMP + diphosphate. The sequence is that of Leucine--tRNA ligase from Staphylococcus haemolyticus (strain JCSC1435).